A 98-amino-acid polypeptide reads, in one-letter code: NADH-ubiquinone oxidoreductase chain 4L (98 aa).

3 helical membrane passes run 2-22 (TPIF…TLIF), 29-49 (SLLC…LIIL), and 61-81 (ILLL…LVMV).

It belongs to the complex I subunit 4L family. In terms of assembly, core subunit of respiratory chain NADH dehydrogenase (Complex I) which is composed of 45 different subunits.

The protein localises to the mitochondrion inner membrane. The enzyme catalyses a ubiquinone + NADH + 5 H(+)(in) = a ubiquinol + NAD(+) + 4 H(+)(out). Functionally, core subunit of the mitochondrial membrane respiratory chain NADH dehydrogenase (Complex I) which catalyzes electron transfer from NADH through the respiratory chain, using ubiquinone as an electron acceptor. Part of the enzyme membrane arm which is embedded in the lipid bilayer and involved in proton translocation. The polypeptide is NADH-ubiquinone oxidoreductase chain 4L (MT-ND4L) (Avahi cleesei (Cleese's woolly lemur)).